We begin with the raw amino-acid sequence, 359 residues long: MERTTNFNAGPAALPLEVLQKAQKEFIDFNESGMSVMELSHRSKEYEAVHQKAKSLLIELMGIPEDYDILFLQGGASLQFSMLPMNFLTPEKTAHFVMTGAWSEKALAETKLFGNTSITATSETDNYSYIPEVDLTDVKDGAYLHITSNNTIFGTQWQEFPNSPIPLVADMSSDILSRKIDVSKFDVIYGGAQKNLGPSGVTVVIMKKSWLQNENANVPKILKYSTHVKADSLYNTPPTFAIYMLSLVLEWLKENGGVEAVEQRNEQKAQVLYSCIDESNGFYKGHARKDSRSRMNVTFTLRDDELTKTFVQKAKDAKMIGLGGHRSVGGCRASIYNAVSLEDCEKLAAFMKKFQQENE.

Arginine 42 provides a ligand contact to L-glutamate. Pyridoxal 5'-phosphate contacts are provided by residues 76–77, tryptophan 102, threonine 151, aspartate 170, and glutamine 193; that span reads AS. Position 194 is an N6-(pyridoxal phosphate)lysine (lysine 194). 235-236 contacts pyridoxal 5'-phosphate; the sequence is NT.

It belongs to the class-V pyridoxal-phosphate-dependent aminotransferase family. SerC subfamily. Homodimer. Requires pyridoxal 5'-phosphate as cofactor.

Its subcellular location is the cytoplasm. The enzyme catalyses O-phospho-L-serine + 2-oxoglutarate = 3-phosphooxypyruvate + L-glutamate. The catalysed reaction is 4-(phosphooxy)-L-threonine + 2-oxoglutarate = (R)-3-hydroxy-2-oxo-4-phosphooxybutanoate + L-glutamate. Its pathway is amino-acid biosynthesis; L-serine biosynthesis; L-serine from 3-phospho-D-glycerate: step 2/3. It participates in cofactor biosynthesis; pyridoxine 5'-phosphate biosynthesis; pyridoxine 5'-phosphate from D-erythrose 4-phosphate: step 3/5. Catalyzes the reversible conversion of 3-phosphohydroxypyruvate to phosphoserine and of 3-hydroxy-2-oxo-4-phosphonooxybutanoate to phosphohydroxythreonine. This Bacillus subtilis (strain 168) protein is Phosphoserine aminotransferase (serC).